An 867-amino-acid chain; its full sequence is DNA mismatch repair protein MutS (867 aa).

606-613 (GPNMSGKS) contributes to the ATP binding site.

It belongs to the DNA mismatch repair MutS family.

Its function is as follows. This protein is involved in the repair of mismatches in DNA. It is possible that it carries out the mismatch recognition step. This protein has a weak ATPase activity. The chain is DNA mismatch repair protein MutS from Oceanobacillus iheyensis (strain DSM 14371 / CIP 107618 / JCM 11309 / KCTC 3954 / HTE831).